A 116-amino-acid polypeptide reads, in one-letter code: Early 4 ORF3 protein (116 aa).

The protein belongs to the adenoviridae E4 ORF3 family. In terms of assembly, homodimer. Multimerizes through C-terminus tail by reciprocal or nonreciprocal interactions. Interacts with host PML isoform 2 C-terminal disordered region. Interacts with E1B-55k; this interaction is necessary for E1B 55 kDa protein to localize to the nuclear matrix fraction of the cell. May interact with host TRIM24, CREBBP, EP300, PRKDC and the MRN complex MRE11/RAD50/NBS1; these interactions may happen through nuclear bodies complexes.

The protein resides in the host nucleus. Its function is as follows. Forms a multivalent network in host nucleus that inhibits nuclear bodies and prevents antiviral cellular activities. The network is made of multimerized dimers and surrounds adenovirus replication centers and nucleolus. Plays a role in splicing of the major late transcript. Prevents viral genome concatemer formation. The polypeptide is Early 4 ORF3 protein (Human adenovirus C serotype 2 (HAdV-2)).